The following is a 712-amino-acid chain: Auxin response factor 15 (712 aa).

The TF-B3 DNA-binding region spans F142–A244.

The protein belongs to the ARF family. As to quaternary structure, homo and heterodimers. As to expression, expressed in roots, culms, leaves and young panicles.

Its subcellular location is the nucleus. Its function is as follows. Auxin response factors (ARFs) are transcriptional factors that bind specifically to the DNA sequence 5'-TGTCTC-3' found in the auxin-responsive promoter elements (AuxREs). The chain is Auxin response factor 15 (ARF15) from Oryza sativa subsp. japonica (Rice).